A 2282-amino-acid chain; its full sequence is Protein Ycf2 (2282 aa).

1637–1644 (GSIGTGRS) serves as a coordination point for ATP.

It belongs to the Ycf2 family.

It localises to the plastid. Its subcellular location is the chloroplast stroma. In terms of biological role, probable ATPase of unknown function. Its presence in a non-photosynthetic plant (Epifagus virginiana) and experiments in tobacco indicate that it has an essential function which is probably not related to photosynthesis. This Citrus sinensis (Sweet orange) protein is Protein Ycf2.